The primary structure comprises 197 residues: Small ribosomal subunit protein uS11m (197 aa).

A compositionally biased stretch (basic and acidic residues) spans 43 to 52; that stretch reads AAKEEVEKAE. Residues 43–66 form a disordered region; the sequence is AAKEEVEKAETPAPAPSRSSFSIY.

It belongs to the universal ribosomal protein uS11 family. In terms of assembly, component of the mitochondrial ribosome small subunit (28S) which comprises a 12S rRNA and about 30 distinct proteins.

It localises to the mitochondrion. The protein is Small ribosomal subunit protein uS11m (MRPS11) of Bos taurus (Bovine).